The sequence spans 139 residues: ATP synthase epsilon chain (139 aa).

The protein belongs to the ATPase epsilon chain family. As to quaternary structure, F-type ATPases have 2 components, CF(1) - the catalytic core - and CF(0) - the membrane proton channel. CF(1) has five subunits: alpha(3), beta(3), gamma(1), delta(1), epsilon(1). CF(0) has three main subunits: a, b and c.

It is found in the cell inner membrane. In terms of biological role, produces ATP from ADP in the presence of a proton gradient across the membrane. This Pseudomonas putida (strain W619) protein is ATP synthase epsilon chain.